A 128-amino-acid polypeptide reads, in one-letter code: Fluoride-specific ion channel FluC (128 aa).

4 consecutive transmembrane segments (helical) span residues 7–29 (LNFIAIGIGATLGAWLRWVLGLR), 36–57 (PWGTLTANLVGGYLIGVMVALI), 65–94 (AWIRLAAVTGFLGGLTTFSTFSAETVDMLE), and 98–126 (YATAAAYAGASLAGSLAMTGLGLATVRLL). Residue Asn43 participates in fluoride binding. Gly77 and Thr80 together coordinate Na(+). Fluoride contacts are provided by Tyr104, Ser108, and Ser112.

This sequence belongs to the fluoride channel Fluc/FEX (TC 1.A.43) family. In terms of assembly, homodimer.

It is found in the cell inner membrane. The catalysed reaction is fluoride(in) = fluoride(out). With respect to regulation, na(+) is not transported, but it plays an essential structural role and its presence is essential for fluoride channel function. The Na(+)-binding site is specific for Na(+) over most other cations including K(+) and Mg(2+). Fluoride efflux is inhibited by Li(2+). Its function is as follows. Fluoride-specific ion channel. Important for reducing fluoride concentration in the cell, thus reducing its toxicity. Is highly specific for fluoride ions and cannot transport chloride ions. The sequence is that of Fluoride-specific ion channel FluC from Bordetella pertussis (strain Tohama I / ATCC BAA-589 / NCTC 13251).